The following is a 145-amino-acid chain: RNAP inhibitory protein (145 aa).

A C-terminal tail, binds in the RNAP DNA-binding channel region spans residues His110 to Ser123.

The protein belongs to the viral ORF131/RIP family. In terms of assembly, interacts with host RNA polymerase (RNAP) subunits Rpo1N and Rpo2.

It is found in the virion. Plays a role in the inhibition of global transcription by interacting with the RNA polymerase (RNAP) clamp, locking it in a fixed position and inhibiting the formation and/or stability of the pre-initiation complex (PIC). Also overlaps with the transcription factor B binding site; overall RIP probably interferes with DNA loading onto RNAP but does not displace DNA once it is loaded. May play a role in virus particle assembly, possibly by dissociating active RNAP from the virus genome. This is RNAP inhibitory protein from Acidianus two-tailed virus (ATV).